A 495-amino-acid polypeptide reads, in one-letter code: Protein YhjJ (495 aa).

The N-terminal stretch at 1 to 24 (MQGTKIRLLAGSLLMLASAGYVQA) is a signal peptide.

It belongs to the peptidase M16 family.

Its subcellular location is the periplasm. The sequence is that of Protein YhjJ (yhjJ) from Salmonella typhi.